The sequence spans 893 residues: DNA endonuclease RBBP8 (893 aa).

The interval 22-45 (ELWTKLKEYHDKEVQGLQVKVTKL) is essential for binding to the MRN complex and for RPA focus formation on DNA damage. Residues 35–84 (VQGLQVKVTKLKKERILDAQRLEEFFTKNQQLRDQQKVLQETIKILEDRL) are a coiled coil. A required for interaction with LMO4, probably by stabilizing the interaction through RPPB8 dimerization region spans residues 45–160 (LKKERILDAQ…AELACEENII (116 aa)). Residues K62 and K115 each participate in a glycyl lysine isopeptide (Lys-Gly) (interchain with G-Cter in SUMO2) cross-link. A coiled-coil region spans residues 117-138 (ITELMNEKNTLQEENKKLSEQL). A Glycyl lysine isopeptide (Lys-Gly) (interchain with G-Cter in SUMO2) cross-link involves residue K193. Phosphoserine occurs at positions 233 and 276. The segment covering 296 to 307 (MESARSKEDSLR) has biased composition (basic and acidic residues). The segment at 296–324 (MESARSKEDSLRFSDSASKTPPQEFTTRA) is disordered. Polar residues predominate over residues 308–324 (FSDSASKTPPQEFTTRA). T315 bears the Phosphothreonine mark. 3 positions are modified to phosphoserine: S325, S326, and S348. Residues K359 and K377 each participate in a glycyl lysine isopeptide (Lys-Gly) (interchain with G-Cter in SUMO2) cross-link. A Phosphoserine modification is found at S378. Glycyl lysine isopeptide (Lys-Gly) (interchain with G-Cter in SUMO2) cross-links involve residues K394, K403, K409, and K437. Residues 489–493 (PLDLS) carry the PXDLS motif motif. The tract at residues 508-556 (NETSKNKLKQATIYEALKPIPKGSSSGRKALSGDCMPAKDSWETYCLQP) is damage-recruitment motif. A Glycyl lysine isopeptide (Lys-Gly) (interchain with G-Cter in SUMO2); alternate cross-link involves residue K525. Glycyl lysine isopeptide (Lys-Gly) (interchain with G-Cter in SUMO2) cross-links involve residues K529, K570, and K576. K602 is covalently cross-linked (Glycyl lysine isopeptide (Lys-Gly) (interchain with G-Cter in SUMO2); alternate). Residues K611, K636, and K638 each participate in a glycyl lysine isopeptide (Lys-Gly) (interchain with G-Cter in SUMO2) cross-link. A required for interaction with LMO4, probably by making physical contact with LMO4 region spans residues 639-683 (ALPSNQDTSFENIQWSVDPGADLSQYKMDVTVIDTKDSSHSRLGG). The residue at position 662 (S662) is a Phosphoserine; by ATM. K674 is covalently cross-linked (Glycyl lysine isopeptide (Lys-Gly) (interchain with G-Cter in SUMO2)). A Phosphoserine modification is found at S677. Residue K716 forms a Glycyl lysine isopeptide (Lys-Gly) (interchain with G-Cter in SUMO2) linkage. At S720 the chain carries Phosphoserine. S742 carries the phosphoserine; by ATM modification. Residue K778 forms a Glycyl lysine isopeptide (Lys-Gly) (interchain with G-Cter in SUMO2) linkage. The KLHL15-binding signature appears at 836–838 (FRY). A phosphothreonine mark is found at T843 and T855. Residue K865 forms a Glycyl lysine isopeptide (Lys-Gly) (interchain with G-Cter in SUMO2) linkage. The segment at 869-893 (DLSPRPKRRQPYNAVFSPKGKEQRT) is disordered.

It belongs to the COM1/SAE2/CtIP family. As to quaternary structure, homotetramer; formed by antiparallel association of helical extensions protruding from the N-termini of two parallel coiled-coil dimers. Forms a dumbbell-shaped particle in which polar globular domains are held about 30 nm apart by a central rod. Homotetramerization is required for DNA-end resection and repair. Interacts (via the PXDLS motif) with CTBP1; the interaction is disrupted via binding of the adenovirus E1A to CTBP1. Component of the BRCA1-RBBP8 complex. Interacts (the Ser-326 phosphorylated form) with BRCA1 (via the C-terminal BRCT domains): the interaction occurs in the G2 phase, ubiquitinates RBBP8 and involves RBBP8 in BRCA1-dependent G2/M checkpoint control on DNA damage. Interacts with RB1. Interacts with the MRN complex. Interacts directly with MRE11; the interaction is required for efficient homologous recombination (HR) and regulation of the MRN complex. Interacts (when phosphorylated by CDK1) with NBN; promoting association with the MRN complex. Interacts with LMO4 (via the LIM zinc-binding 1 domain). Interacts with SIAH1. Interacts with RNF138. Interacts with EXD2. Interacts with CUL3 and KLHL15; this interaction leads to RBBP8 proteasomal degradation. Directly interacts with PIN1; this interaction depends upon RBBP8 phosphorylation, predominantly at Thr-315. Interacts with FZR1; this interaction leads to APC/C-mediated RBBP8 proteasomal degradation. Interacts with AUNIP; leading to recruit RBBP8 to sites of DNA damage. Interacts with SAMHD1. Interacts with HDGFL2. Hyperphosphorylation upon ionizing radiation results in dissociation from BRCA1. Phosphorylation at Thr-843 by CDK1 is essential for the recruitment to DNA and the DNA repair function. Phosphorylation at Thr-843 and Thr-855 promote interaction with NBN and recruitment to double-strand breaks (DSBs). Phosphorylated on Ser-326 as cells enter G2 phase. Phosphorylated at Ser-326 as cells enter G2 phase. This phosphorylation is required for binding BRCA1 and for the G2/M DNA damage transition checkpoint control. Phosphorylation at Thr-315 is required for PIN1-binding, while phosphorylation at Ser-276 serves as a PIN1 isomerization site. Phosphorylation at Thr-315 is cell-cycle dependent. It steadily increases during S phase, peaks at late S/G2 phase, and drops at G1. Phosphorylation is not required for tetramerization. Binds to DNA more strongly when dephosphorylated. Post-translationally, ubiquitinated. Ubiquitination at multiple sites by BRCA1 (via its N-terminal RING domain) does not lead to its proteasomal degradation but instead the ubiquitinated RBBP8 binds to chromatin following DNA damage and may play a role in G2/M checkpoint control. Ubiquitinated by RNF138 at its N-terminus. Ubiquitinated through 'Lys-48' by the E3 CUL3-KLHL15 complex; this modification leads to proteasomal degradation. Ubiquitinated by the E3 FZR1/APC/C complex; this modification leads to proteasomal degradation.

The protein localises to the nucleus. The protein resides in the chromosome. Functionally, endonuclease that cooperates with the MRE11-RAD50-NBN (MRN) complex in DNA-end resection, the first step of double-strand break (DSB) repair through the homologous recombination (HR) pathway. HR is restricted to S and G2 phases of the cell cycle and preferentially repairs DSBs resulting from replication fork collapse. Key determinant of DSB repair pathway choice, as it commits cells to HR by preventing classical non-homologous end-joining (NHEJ). Specifically promotes the endonuclease activity of the MRN complex to clear DNA ends containing protein adducts: recruited to DSBs by NBN following phosphorylation by CDK1, and promotes the endonuclease activity of MRE11 to clear protein-DNA adducts and generate clean double-strand break ends. Functions downstream of the MRN complex and ATM, promotes ATR activation and its recruitment to DSBs in the S/G2 phase facilitating the generation of ssDNA. Component of the BRCA1-RBBP8 complex that regulates CHEK1 activation and controls cell cycle G2/M checkpoints on DNA damage. During immunoglobulin heavy chain class-switch recombination, promotes microhomology-mediated alternative end joining (A-NHEJ) and plays an essential role in chromosomal translocations. Binds preferentially to DNA Y-junctions and to DNA substrates with blocked ends and promotes intermolecular DNA bridging. In Mus musculus (Mouse), this protein is DNA endonuclease RBBP8 (Rbbp8).